The following is a 443-amino-acid chain: Cyclin-A2-1 (443 aa).

Residues 1-10 (MHRASSKHTN) are compositionally biased toward basic residues. The disordered stretch occupies residues 1–61 (MHRASSKHTN…KRVARPSNKR (61 aa)). A compositionally biased stretch (basic and acidic residues) spans 11–25 (AKKEAISTSKIRDNN).

The protein belongs to the cyclin family. Cyclin AB subfamily. As to expression, expressed in tissues with active cell division: apical root and shoot meristems, lateral root and leaf primordia, floral meristems and developing pollen.

May negatively regulate endocycles and act as a regulator of ploidy levels in endoreduplication. This Arabidopsis thaliana (Mouse-ear cress) protein is Cyclin-A2-1 (CYCA2-1).